A 299-amino-acid chain; its full sequence is Nucleotide-binding protein glr4163 (299 aa).

S18–T25 lines the ATP pocket.

It belongs to the RapZ-like family.

Its function is as follows. Displays ATPase and GTPase activities. The sequence is that of Nucleotide-binding protein glr4163 from Gloeobacter violaceus (strain ATCC 29082 / PCC 7421).